Consider the following 116-residue polypeptide: Antimicrobial peptide 1b (116 aa).

An N-terminal signal peptide occupies residues 1–34 (MKPHMSATVLRAPRVAAILLAVVLAAVLATAVNG). The Chitin-binding type-1 domain occupies 35-77 (AQRCGDQARGAKCPNCLCCGKYGFCGSGDAYCGAGSCQSQCRG). 5 disulfides stabilise this stretch: Cys38–Cys53, Cys47–Cys59, Cys50–Cys78, Cys52–Cys66, and Cys71–Cys75. A propeptide spanning residues 80-116 (DDVVGQALPAEPGSTRATAASSASARGLNLTATTGGP) is cleaved from the precursor. The segment at 89-116 (AEPGSTRATAASSASARGLNLTATTGGP) is disordered. Low complexity predominate over residues 93–105 (STRATAASSASAR).

In terms of biological role, binds chitin. Has antifungal activity against the fungi F.solani (IC(50)=5 ug/ml), F.verticillioides (IC(50)=30 ug/ml), F.oxysporum (IC(50)=5 ug/ml), B.sorokiniana (IC(50)=5 ug/ml), B.cinerea (IC(50)=20 ug/ml) and N.crassa (IC(50)=10 ug/ml). Inhibits hyphal elongation and causes browning of hyphae in F.oxysporum. Causes destruction and discoloration of spores in B.sorokiniana. Inhibits the development of disease caused by the fungus P.infestans on potato tubers. Has antibacterial activity against the Gram-negative bacteria P.syringae and E.carotovora, and the Gram-positive bacterium C.michiganensis. Has antifungal activity against F.verticillioides (IC(50)=2.7 ug/ml). At concentrations between 45 uM and 225 uM, inhibits activity of metalloproteinase fungalysin Fv-cpm from F.verticillioides. This chain is Antimicrobial peptide 1b, found in Triticum kiharae (Wheat).